A 202-amino-acid chain; its full sequence is Capsid protein (202 aa).

The protein belongs to the tymoviruses capsid protein family.

It is found in the virion. Functionally, self-assembles to form a T=3 icosahedral capsid composed of 180 copies of the capsid protein. The capsid encapsulates the single-stranded RNA genome. The polypeptide is Capsid protein (Erysimum (ELV)).